We begin with the raw amino-acid sequence, 70 residues long: Large ribosomal subunit protein eL43 (70 aa).

Residues Cys36, Cys39, Cys55, and Cys58 each coordinate Zn(2+). Residues 36-58 (CPYCKTTGKVIRLASGIWYCKKC) form a C4-type zinc finger.

This sequence belongs to the eukaryotic ribosomal protein eL43 family. Putative zinc-binding subfamily. As to quaternary structure, part of the 50S ribosomal subunit. It depends on Zn(2+) as a cofactor.

In terms of biological role, binds to the 23S rRNA. The chain is Large ribosomal subunit protein eL43 from Saccharolobus solfataricus (strain ATCC 35092 / DSM 1617 / JCM 11322 / P2) (Sulfolobus solfataricus).